We begin with the raw amino-acid sequence, 470 residues long: MTKTLPEDFIFGGATAAYQAEGATNTDGKGRVAWDTYLEENYWYTAEPASDFYNRYPVDLELSEKFGVNGIRISIAWSRIFPNGYGEVNPKGVEYYHKLFAECHKRHVEPFVTLHHFDTPEVLHKDGDFLNRKTIDYFVDYAEYCFKEFPEVKYWTTFNEIGPIGDGQYLVGKFPPGIKYDFEKVFQSHHNMMVAHARAVKLFKDGGYKGEIGVVHALPTKYPFDPSNPEDVRAAELEDIIHNKFILDATYLGKYSRETMEGVQHILSVNGGKLNITDEDYAILDAAKDLNDFLGINYYMSDWMRGYDGESEITHNATGDKGGSKYQLKGVGQREFDVDVPRTDWDWMIYPQGLYDQIMRVVKDYPNYHKIYITENGLGYKDEFIESEKTVHDDARIDYVRQHLNVIADAIIDGANVKGYFIWSLMDVFSWSNGYEKRYGLFYVDFETQERYPKKSAYWYKELAETKEIK.

The D-galactose 6-phosphate site is built by Gln-19, His-116, Asn-159, Glu-160, and Asn-297. The Proton donor role is filled by Glu-160. Glu-375 functions as the Nucleophile in the catalytic mechanism. Residues Ser-430, Trp-431, Lys-437, and Tyr-439 each coordinate D-galactose 6-phosphate.

The protein belongs to the glycosyl hydrolase 1 family.

The enzyme catalyses a 6-phospho-beta-D-galactoside + H2O = D-galactose 6-phosphate + an alcohol. Its pathway is carbohydrate metabolism; lactose degradation; D-galactose 6-phosphate and beta-D-glucose from lactose 6-phosphate: step 1/1. This Staphylococcus aureus (strain USA300) protein is 6-phospho-beta-galactosidase.